Here is a 77-residue protein sequence, read N- to C-terminus: NAD(P)H-quinone oxidoreductase subunit L (77 aa).

2 helical membrane passes run 12–32 and 47–67; these read LVAY…ILFY and LIVY…SPFL.

Belongs to the complex I NdhL subunit family. In terms of assembly, NDH-1 can be composed of about 15 different subunits; different subcomplexes with different compositions have been identified which probably have different functions.

It localises to the cellular thylakoid membrane. It carries out the reaction a plastoquinone + NADH + (n+1) H(+)(in) = a plastoquinol + NAD(+) + n H(+)(out). The catalysed reaction is a plastoquinone + NADPH + (n+1) H(+)(in) = a plastoquinol + NADP(+) + n H(+)(out). Its function is as follows. NDH-1 shuttles electrons from an unknown electron donor, via FMN and iron-sulfur (Fe-S) centers, to quinones in the respiratory and/or the photosynthetic chain. The immediate electron acceptor for the enzyme in this species is believed to be plastoquinone. Couples the redox reaction to proton translocation, and thus conserves the redox energy in a proton gradient. Cyanobacterial NDH-1 also plays a role in inorganic carbon-concentration. This chain is NAD(P)H-quinone oxidoreductase subunit L, found in Prochlorococcus marinus subsp. pastoris (strain CCMP1986 / NIES-2087 / MED4).